We begin with the raw amino-acid sequence, 203 residues long: E3 ubiquitin-protein ligase RNF152 (203 aa).

An RING-type zinc finger spans residues 12-55 (CQICFNYYSPRRRPKLLDCKHTCCSVCLQQMRTSQKDVRCPWCR). The interval 106–165 (ISKERTLLPGDMGCRLLPGSQQKSLTVVTIPAEQQPLQGGAPPEAVEEEPDRRGVVKSST) is necessary for interaction with RRAGA. The tract at residues 139–158 (QQPLQGGAPPEAVEEEPDRR) is disordered. A helical transmembrane segment spans residues 167–187 (SGVCTVILVACVLVFLLGIVL).

This sequence belongs to the RNF152 family. In terms of assembly, interacts with RRAGA (inactive GDP-bound form); stimulated by amino acid starvation. Interacts with SEC16A. Ubiquitinated. Autoubiquitinated in vitro, leading to its degradation by the proteasome.

The protein localises to the lysosome membrane. It carries out the reaction S-ubiquitinyl-[E2 ubiquitin-conjugating enzyme]-L-cysteine + [acceptor protein]-L-lysine = [E2 ubiquitin-conjugating enzyme]-L-cysteine + N(6)-ubiquitinyl-[acceptor protein]-L-lysine.. It participates in protein modification; protein ubiquitination. Functionally, E3 ubiquitin-protein ligase that acts as a negative regulator of mTORC1 signaling by mediating ubiquitination of RagA/RRAGA and RHEB. Catalyzes 'Lys-63'-linked polyubiquitination of RagA/RRAGA in response to amino acid starvation, thereby regulating mTORC1 signaling. Also mediates monoubiquitination of RHEB, promoting its association with the TSC-TBC complex and subsequent inhibition. Also mediates 'Lys-48'-linked polyubiquitination of target proteins and their subsequent targeting to the proteasome for degradation. Induces apoptosis when overexpressed. The sequence is that of E3 ubiquitin-protein ligase RNF152 from Mus musculus (Mouse).